Consider the following 86-residue polypeptide: Small ribosomal subunit protein bS20 (86 aa).

Residues 1–27 are compositionally biased toward basic residues; the sequence is MANSKSAKKRATQAERRRQHNASRRSM. The interval 1 to 28 is disordered; the sequence is MANSKSAKKRATQAERRRQHNASRRSMM.

This sequence belongs to the bacterial ribosomal protein bS20 family.

Its function is as follows. Binds directly to 16S ribosomal RNA. The protein is Small ribosomal subunit protein bS20 of Aliivibrio fischeri (strain MJ11) (Vibrio fischeri).